Here is a 411-residue protein sequence, read N- to C-terminus: MSLRLFSSESVTEGHPDKICDAISDKILDALIAKDPEARVAVETVVTTGLVHVVGEIRTTTYVEIPALVRKTLLEIGFNSSDMGFDGSTCGVSVAIGEQSQEIAQGVDTALEHRSHDAEGGAELDEIDRLGAGDQGLMFGYATNETPEYMPLPIALAHRLSRRLTEVRKKGIVPHLRPDGKTQVTFAYDAEGAPVRLDTVVVSTQHDAGIEQEWLHEQIRTHVVQHVLDEAGLSGNLADTDYTLLVNPSGSFVLGGPMGDAGLTGRKIIVDTYGGMARHGGGAFSGKDPSKVDRSGAYAMRWVAKNIVAAGLADRAEVQVAYAIGRATPVGLYVETFGTEKAPVEAIQAAVRQVFDLRPAAILQELDLKRPIYAQTSAYGHFGRTDLDLPWERTDRVEALQKAVAAAQQSQ.

Histidine 15 is an ATP binding site. Aspartate 17 is a Mg(2+) binding site. A K(+)-binding site is contributed by glutamate 43. Residues glutamate 56 and glutamine 99 each coordinate L-methionine. A flexible loop region spans residues 99 to 109 (QSQEIAQGVDT). Residues 179–181 (DGK), aspartate 260, 266–267 (RK), alanine 283, and lysine 287 contribute to the ATP site. Aspartate 260 is a binding site for L-methionine. Residue lysine 291 participates in L-methionine binding.

This sequence belongs to the AdoMet synthase family. Homotetramer; dimer of dimers. It depends on Mg(2+) as a cofactor. K(+) serves as cofactor.

It is found in the cytoplasm. The enzyme catalyses L-methionine + ATP + H2O = S-adenosyl-L-methionine + phosphate + diphosphate. It functions in the pathway amino-acid biosynthesis; S-adenosyl-L-methionine biosynthesis; S-adenosyl-L-methionine from L-methionine: step 1/1. Functionally, catalyzes the formation of S-adenosylmethionine (AdoMet) from methionine and ATP. The overall synthetic reaction is composed of two sequential steps, AdoMet formation and the subsequent tripolyphosphate hydrolysis which occurs prior to release of AdoMet from the enzyme. The polypeptide is S-adenosylmethionine synthase (Corynebacterium jeikeium (strain K411)).